The primary structure comprises 109 residues: Ferredoxin CarAc (109 aa).

Residues 3 to 108 (AKVRVIFRAA…GLTLELPKAQ (106 aa)) enclose the 2Fe-2S ferredoxin-type domain. 4 residues coordinate [2Fe-2S] cluster: Cys43, Cys49, Cys52, and Cys89.

The protein belongs to the adrenodoxin/putidaredoxin family. As to quaternary structure, monomer. Carbazole 1,9a-dioxygenase complex consists of a terminal oxygenase component CarAa, a ferredoxin reductase component fdr and a ferredoxin component CarAc. The cofactor is [2Fe-2S] cluster.

Part of the multicomponent carbazole 1,9a-dioxygenase (CARDO), that converts carbazole (CAR) into 2-aminobiphenyl-2,3-diol. Acts as a mediator in the electron transfer from fdr to CarAa. The polypeptide is Ferredoxin CarAc (carAc) (Sphingomonas sp).